A 571-amino-acid chain; its full sequence is Phosphomethylpyrimidine synthase (571 aa).

Substrate contacts are provided by residues Asn-201, Met-230, Tyr-259, His-295, 315–317 (SRG), 356–359 (DALR), and Glu-395. His-399 contacts Zn(2+). Residue Tyr-422 coordinates substrate. Residue His-463 participates in Zn(2+) binding. [4Fe-4S] cluster is bound by residues Cys-545, Cys-548, and Cys-553.

This sequence belongs to the ThiC family. The cofactor is [4Fe-4S] cluster.

It carries out the reaction 5-amino-1-(5-phospho-beta-D-ribosyl)imidazole + S-adenosyl-L-methionine = 4-amino-2-methyl-5-(phosphooxymethyl)pyrimidine + CO + 5'-deoxyadenosine + formate + L-methionine + 3 H(+). It participates in cofactor biosynthesis; thiamine diphosphate biosynthesis. In terms of biological role, catalyzes the synthesis of the hydroxymethylpyrimidine phosphate (HMP-P) moiety of thiamine from aminoimidazole ribotide (AIR) in a radical S-adenosyl-L-methionine (SAM)-dependent reaction. In Chlorobium phaeovibrioides (strain DSM 265 / 1930) (Prosthecochloris vibrioformis (strain DSM 265)), this protein is Phosphomethylpyrimidine synthase.